Consider the following 530-residue polypeptide: Rho GTPase-activating protein 36 (530 aa).

An N-terminal signal peptide occupies residues 1-19; the sequence is MPPLLLLSALIFLVNVLGG. One can recognise a Rho-GAP domain in the interval 209 to 409; the sequence is MSLNPIAKQI…AMIDNWDVLF (201 aa). Residues 471–512 are disordered; it reads GQSKPFDEGSSEEPAVPPGTARSHDDEEGAGNPLILEQDRPL.

In terms of assembly, may interacts (via the Rho-GAP domain) with the active form of RAC1.

In terms of biological role, GTPase activator for the Rho-type GTPases by converting them to an inactive GDP-bound state. This is Rho GTPase-activating protein 36 (ARHGAP36) from Bos taurus (Bovine).